A 182-amino-acid polypeptide reads, in one-letter code: UPF0397 protein SPT_0523 (182 aa).

Transmembrane regions (helical) follow at residues 10-30, 46-66, 73-93, 109-129, and 148-168; these read VVAV…NIPT, LLSI…GHAI, YGLW…VGLF, ILIF…VLAP, and IVAG…LLLA.

This sequence belongs to the UPF0397 family.

The protein resides in the cell membrane. The chain is UPF0397 protein SPT_0523 from Streptococcus pneumoniae (strain Taiwan19F-14).